The sequence spans 640 residues: Pro-neuregulin-1, membrane-bound isoform (640 aa).

The propeptide occupies 1–19 (MSERKEGRGKGKGKKKERG). Residues 1–53 (MSERKEGRGKGKGKKKERGSGKKPESAAGSQSPALPPRLKEMKSQESAAGSKL) are disordered. The Extracellular segment spans residues 20–242 (SGKKPESAAG…EKAEELYQKR (223 aa)). The 92-residue stretch at 37 to 128 (PRLKEMKSQE…GNDSASANIT (92 aa)) folds into the Ig-like C2-type domain. A disulfide bridge connects residues Cys-57 and Cys-112. N-linked (GlcNAc...) asparagine glycosylation is found at Asn-120, Asn-126, and Asn-164. In terms of domain architecture, EGF-like spans 178 to 222 (HLVKCAEKEKTFCVNGGECFMVKDLSNPSRYLCKCQPGFTGARCT). Cystine bridges form between Cys-182–Cys-196, Cys-190–Cys-210, and Cys-212–Cys-221. The chain crosses the membrane as a helical span at residues 243–265 (VLTITGICIALLVVGIMCVVAYC). Over 266–640 (KTKKQRKKLH…VIANQDPIAV (375 aa)) the chain is Cytoplasmic. The segment covering 334 to 350 (TSHYTSTAHHSTTVTQT) has biased composition (low complexity). Disordered stretches follow at residues 334–360 (TSHYTSTAHHSTTVTQTPSHSWSNGHT), 375–399 (SVENSRHSSPTGGPRGRLNGTGGPR), 433–461 (RMSPVDFHTPSSPKSPPSEMSPPVSSMTV), and 524–588 (EYET…DTPF). A compositionally biased stretch (polar residues) spans 351-360 (PSHSWSNGHT). Over residues 387–397 (GPRGRLNGTGG) the composition is skewed to gly residues. Positions 542–552 (ANSRRAKRTKP) are enriched in basic residues. The span at 563–574 (DSNTSSQSSNSE) shows a compositional bias: low complexity.

The protein belongs to the neuregulin family. In terms of assembly, the cytoplasmic domain interacts with the LIM domain region of LIMK1. Forms a ternary complex with ERBB3 and ITGAV:ITGB3 or ITGA6:ITGB4. Interacts with NRDC and BACE1. In terms of processing, proteolytic cleavage close to the plasma membrane on the external face leads to the release of the soluble growth factor form. Post-translationally, N- and O-glycosylated. Extensive glycosylation precedes the proteolytic cleavage. Type I isoforms are the predominant forms expressed in the endocardium. Isoform alpha is expressed in breast, ovary, testis, prostate, heart, skeletal muscle, lung, placenta liver, kidney, salivary gland, small intestine and brain, but not in uterus, stomach, pancreas, and spleen. Isoform 3 is the predominant form in mesenchymal cells and in non-neuronal organs, whereas isoform 6 is the major neuronal form. Isoform 8 is expressed in spinal cord and brain. Isoform 9 is the major form in skeletal muscle cells; in the nervous system it is expressed in spinal cord and brain. Also detected in adult heart, placenta, lung, liver, kidney, and pancreas. Isoform 10 is expressed in nervous system: spinal cord motor neurons, dorsal root ganglion neurons, and brain. Predominant isoform expressed in sensory and motor neurons. Not detected in adult heart, placenta, lung, liver, skeletal muscle, kidney, and pancreas. Not expressed in fetal lung, liver and kidney. Type IV isoforms are brain-specific.

It is found in the cell membrane. It localises to the secreted. Its subcellular location is the nucleus. The protein resides in the membrane. Direct ligand for ERBB3 and ERBB4 tyrosine kinase receptors. Concomitantly recruits ERBB1 and ERBB2 coreceptors, resulting in ligand-stimulated tyrosine phosphorylation and activation of the ERBB receptors. The multiple isoforms perform diverse functions such as inducing growth and differentiation of epithelial, glial, neuronal, and skeletal muscle cells; inducing expression of acetylcholine receptor in synaptic vesicles during the formation of the neuromuscular junction; stimulating lobuloalveolar budding and milk production in the mammary gland and inducing differentiation of mammary tumor cells; stimulating Schwann cell proliferation; implication in the development of the myocardium such as trabeculation of the developing heart. Isoform 10 may play a role in motor and sensory neuron development. Binds to ERBB4. Binds to ERBB3. Acts as a ligand for integrins and binds (via EGF domain) to integrins ITGAV:ITGB3 or ITGA6:ITGB4. Its binding to integrins and subsequent ternary complex formation with integrins and ERRB3 are essential for NRG1-ERBB signaling. Induces the phosphorylation and activation of MAPK3/ERK1, MAPK1/ERK2 and AKT1. Ligand-dependent ERBB4 endocytosis is essential for the NRG1-mediated activation of these kinases in neurons. This Homo sapiens (Human) protein is Pro-neuregulin-1, membrane-bound isoform (NRG1).